We begin with the raw amino-acid sequence, 162 residues long: RNA pyrophosphohydrolase (162 aa).

The Nudix hydrolase domain occupies glutamate 7–glutamate 149. The Nudix box signature appears at glycine 40–glycine 61.

It belongs to the Nudix hydrolase family. RppH subfamily. A divalent metal cation serves as cofactor.

Functionally, accelerates the degradation of transcripts by removing pyrophosphate from the 5'-end of triphosphorylated RNA, leading to a more labile monophosphorylated state that can stimulate subsequent ribonuclease cleavage. The chain is RNA pyrophosphohydrolase from Wolbachia pipientis subsp. Culex pipiens (strain wPip).